The sequence spans 469 residues: Glutamate--tRNA ligase 2 (469 aa).

Residues 8 to 18 (PSPTGFLHVGG) carry the 'HIGH' region motif. Positions 250-254 (KLSKR) match the 'KMSKS' region motif. An ATP-binding site is contributed by K253.

It belongs to the class-I aminoacyl-tRNA synthetase family. Glutamate--tRNA ligase type 1 subfamily. Monomer.

The protein localises to the cytoplasm. The catalysed reaction is tRNA(Glu) + L-glutamate + ATP = L-glutamyl-tRNA(Glu) + AMP + diphosphate. Catalyzes the attachment of glutamate to tRNA(Glu) in a two-step reaction: glutamate is first activated by ATP to form Glu-AMP and then transferred to the acceptor end of tRNA(Glu). The polypeptide is Glutamate--tRNA ligase 2 (Thermotoga sp. (strain RQ2)).